Here is a 201-residue protein sequence, read N- to C-terminus: Anthranilate synthase component 2 (201 aa).

The Glutamine amidotransferase type-1 domain maps to 2–201 (KVLILDNYDS…KCLLRNFINS (200 aa)). 59–61 (GPG) provides a ligand contact to L-glutamine. Cys89 (nucleophile; for GATase activity) is an active-site residue. Residues Gln93 and 139–140 (SL) each bind L-glutamine. Residues His182 and Glu184 each act as for GATase activity in the active site.

Heterotetramer consisting of two non-identical subunits: a beta subunit (TrpG) and a large alpha subunit (TrpE).

It carries out the reaction chorismate + L-glutamine = anthranilate + pyruvate + L-glutamate + H(+). It functions in the pathway amino-acid biosynthesis; L-tryptophan biosynthesis; L-tryptophan from chorismate: step 1/5. Its function is as follows. Part of a heterotetrameric complex that catalyzes the two-step biosynthesis of anthranilate, an intermediate in the biosynthesis of L-tryptophan. In the first step, the glutamine-binding beta subunit (TrpG) of anthranilate synthase (AS) provides the glutamine amidotransferase activity which generates ammonia as a substrate that, along with chorismate, is used in the second step, catalyzed by the large alpha subunit of AS (TrpE) to produce anthranilate. In the absence of TrpG, TrpE can synthesize anthranilate directly from chorismate and high concentrations of ammonia. In Leptospira biflexa, this protein is Anthranilate synthase component 2 (trpG).